The primary structure comprises 459 residues: XK-related protein 3 (459 aa).

10 consecutive transmembrane segments (helical) span residues 35–55 (FSIIFSTVLYCGEVAFGLYMF), 68–88 (SFTISFIIVGAILDQIILMFF), 97–117 (AALLFWHILLLGPIVRCLHTI), 169–189 (IQAFLGSVPQLILQMYISLTI), 199–219 (LMTFSLLSVTYGAIRCNILAI), 238–258 (VVMWRFLEVISRVVTLAFFIA), 264–284 (SLPVLLIIYFVSLLAPWLEFW), 300–320 (MVGTVLMLFLITLLYAAINFS), 345–365 (ILHYSFQFLENVIMILVFRFF), and 377–397 (LIAVQLIISYLLATGFMLLFY).

It belongs to the XK family. Expressed predominantly, if not exclusively, in testis.

It is found in the cell membrane. The sequence is that of XK-related protein 3 (XKR3) from Homo sapiens (Human).